The following is a 153-amino-acid chain: MSRAPKLTLNLQFPAARSWPEHKALLPRATVAGWIKAALFADGELTVRFVDADEGRTLNRTYRGKDYSTNVLTFAYAESEDDPVTGDLILCCPVVEKEAAEQGKPLIAHYAHLLVHGTLHAQGYDHEVEEEAEEMEAIETEILAKLGFPDPYQ.

Positions 116, 120, and 126 each coordinate Zn(2+).

Belongs to the endoribonuclease YbeY family. The cofactor is Zn(2+).

The protein localises to the cytoplasm. Functionally, single strand-specific metallo-endoribonuclease involved in late-stage 70S ribosome quality control and in maturation of the 3' terminus of the 16S rRNA. This is Endoribonuclease YbeY from Paraburkholderia phytofirmans (strain DSM 17436 / LMG 22146 / PsJN) (Burkholderia phytofirmans).